The sequence spans 370 residues: Aminomethyltransferase (370 aa).

This sequence belongs to the GcvT family. In terms of assembly, the glycine cleavage system is composed of four proteins: P, T, L and H.

The catalysed reaction is N(6)-[(R)-S(8)-aminomethyldihydrolipoyl]-L-lysyl-[protein] + (6S)-5,6,7,8-tetrahydrofolate = N(6)-[(R)-dihydrolipoyl]-L-lysyl-[protein] + (6R)-5,10-methylene-5,6,7,8-tetrahydrofolate + NH4(+). Functionally, the glycine cleavage system catalyzes the degradation of glycine. The protein is Aminomethyltransferase of Corynebacterium aurimucosum (strain ATCC 700975 / DSM 44827 / CIP 107346 / CN-1) (Corynebacterium nigricans).